A 145-amino-acid chain; its full sequence is Large ribosomal subunit protein uL15 (145 aa).

Residues Met1 to Arg18 are compositionally biased toward basic and acidic residues. The segment at Met1–Glu51 is disordered. Residues Ser42 to Glu51 show a composition bias toward gly residues.

This sequence belongs to the universal ribosomal protein uL15 family. In terms of assembly, part of the 50S ribosomal subunit.

Binds to the 23S rRNA. This chain is Large ribosomal subunit protein uL15, found in Mesoplasma florum (strain ATCC 33453 / NBRC 100688 / NCTC 11704 / L1) (Acholeplasma florum).